The primary structure comprises 211 residues: Large ribosomal subunit protein uL4 (211 aa).

Residues 46-55 are compositionally biased toward polar residues; that stretch reads GNHATKTRSM. Positions 46-89 are disordered; the sequence is GNHATKTRSMVSGGGKKPWSQKGTGRARQGSTRAPHWVGGGTVH.

This sequence belongs to the universal ribosomal protein uL4 family. Part of the 50S ribosomal subunit.

In terms of biological role, one of the primary rRNA binding proteins, this protein initially binds near the 5'-end of the 23S rRNA. It is important during the early stages of 50S assembly. It makes multiple contacts with different domains of the 23S rRNA in the assembled 50S subunit and ribosome. Its function is as follows. Forms part of the polypeptide exit tunnel. The chain is Large ribosomal subunit protein uL4 from Leptospira interrogans serogroup Icterohaemorrhagiae serovar copenhageni (strain Fiocruz L1-130).